A 488-amino-acid chain; its full sequence is Glutamyl-tRNA(Gln) amidotransferase subunit A (488 aa).

Residues K78 and S153 each act as charge relay system in the active site. Residue S177 is the Acyl-ester intermediate of the active site.

The protein belongs to the amidase family. GatA subfamily. As to quaternary structure, heterotrimer of A, B and C subunits.

It carries out the reaction L-glutamyl-tRNA(Gln) + L-glutamine + ATP + H2O = L-glutaminyl-tRNA(Gln) + L-glutamate + ADP + phosphate + H(+). In terms of biological role, allows the formation of correctly charged Gln-tRNA(Gln) through the transamidation of misacylated Glu-tRNA(Gln) in organisms which lack glutaminyl-tRNA synthetase. The reaction takes place in the presence of glutamine and ATP through an activated gamma-phospho-Glu-tRNA(Gln). In Solidesulfovibrio magneticus (strain ATCC 700980 / DSM 13731 / RS-1) (Desulfovibrio magneticus), this protein is Glutamyl-tRNA(Gln) amidotransferase subunit A.